A 1397-amino-acid polypeptide reads, in one-letter code: Ankyrin repeat domain-containing protein 30A (1397 aa).

ANK repeat units lie at residues Q72 to V101, E105 to L134, Y138 to V167, A171 to A200, Y204 to A233, and C237 to T271. The segment covering N267–G279 has biased composition (polar residues). Disordered stretches follow at residues N267 to A376, P453 to C482, Q782 to E807, and T902 to T931. 2 stretches are compositionally biased toward basic and acidic residues: residues R290–D304 and R312–D326. Polar residues predominate over residues K455 to R467. Composition is skewed to basic and acidic residues over residues Q782–E800 and S913–T931. Coiled coils occupy residues V998–K1188 and E1282–Q1327.

As to expression, mainly expressed in breast and testis. A very faint signal is detected in placenta. Also expressed in many breast cancer cells.

This is Ankyrin repeat domain-containing protein 30A (ANKRD30A) from Homo sapiens (Human).